The primary structure comprises 144 residues: Cytochrome c oxidase subunit 4 isoform 1, mitochondrial (144 aa).

Residues 1-73 (SVVKSEDFSL…SFAEMNRGSN (73 aa)) are Mitochondrial matrix-facing. An N6-acetyllysine; alternate modification is found at lysine 4. Lysine 4 carries the post-translational modification N6-succinyllysine; alternate. Position 28 is an N6-acetyllysine (lysine 28). Phosphoserine occurs at positions 31 and 33. Lysine 35 carries the post-translational modification N6-acetyllysine; alternate. N6-succinyllysine; alternate is present on lysine 35. Lysine 42 is modified (N6-acetyllysine). The helical transmembrane segment at 74-99 (EWKTVVGGAMFFIGFTALIIMWQKRH) threads the bilayer. Residues 100 to 144 (VYGPLPQSFDKEWVAKQTKRMLDMKVNPIQGLASKWDYEKNEWKK) lie on the Mitochondrial intermembrane side of the membrane.

The protein belongs to the cytochrome c oxidase IV family. In terms of assembly, component of the cytochrome c oxidase (complex IV, CIV), a multisubunit enzyme composed of 14 subunits. The complex is composed of a catalytic core of 3 subunits MT-CO1, MT-CO2 and MT-CO3, encoded in the mitochondrial DNA, and 11 supernumerary subunits COX4I, COX5A, COX5B, COX6A, COX6B, COX6C, COX7A, COX7B, COX7C, COX8 and NDUFA4, which are encoded in the nuclear genome. The complex exists as a monomer or a dimer and forms supercomplexes (SCs) in the inner mitochondrial membrane with NADH-ubiquinone oxidoreductase (complex I, CI) and ubiquinol-cytochrome c oxidoreductase (cytochrome b-c1 complex, complex III, CIII), resulting in different assemblies (supercomplex SCI(1)III(2)IV(1) and megacomplex MCI(2)III(2)IV(2)). Interacts with PHB2; the interaction decreases in absence of SPHK2. Interacts with AFG1L. Interacts with ABCB7; this interaction allows the regulation of cellular iron homeostasis and cellular reactive oxygen species (ROS) levels in cardiomyocytes. Interacts with FLVCR2; this interaction occurs in the absence of heme and is disrupted upon heme binding. Interacts with IRGC.

The protein resides in the mitochondrion inner membrane. It functions in the pathway energy metabolism; oxidative phosphorylation. Component of the cytochrome c oxidase, the last enzyme in the mitochondrial electron transport chain which drives oxidative phosphorylation. The respiratory chain contains 3 multisubunit complexes succinate dehydrogenase (complex II, CII), ubiquinol-cytochrome c oxidoreductase (cytochrome b-c1 complex, complex III, CIII) and cytochrome c oxidase (complex IV, CIV), that cooperate to transfer electrons derived from NADH and succinate to molecular oxygen, creating an electrochemical gradient over the inner membrane that drives transmembrane transport and the ATP synthase. Cytochrome c oxidase is the component of the respiratory chain that catalyzes the reduction of oxygen to water. Electrons originating from reduced cytochrome c in the intermembrane space (IMS) are transferred via the dinuclear copper A center (CU(A)) of subunit 2 and heme A of subunit 1 to the active site in subunit 1, a binuclear center (BNC) formed by heme A3 and copper B (CU(B)). The BNC reduces molecular oxygen to 2 water molecules using 4 electrons from cytochrome c in the IMS and 4 protons from the mitochondrial matrix. The polypeptide is Cytochrome c oxidase subunit 4 isoform 1, mitochondrial (COX4I1) (Pongo pygmaeus (Bornean orangutan)).